The following is a 121-amino-acid chain: Large ribosomal subunit protein uL18 (121 aa).

Belongs to the universal ribosomal protein uL18 family. As to quaternary structure, part of the 50S ribosomal subunit; part of the 5S rRNA/L5/L18/L25 subcomplex. Contacts the 5S and 23S rRNAs.

Functionally, this is one of the proteins that bind and probably mediate the attachment of the 5S RNA into the large ribosomal subunit, where it forms part of the central protuberance. The sequence is that of Large ribosomal subunit protein uL18 from Moorella thermoacetica (strain ATCC 39073 / JCM 9320).